The following is a 138-amino-acid chain: Large ribosomal subunit protein uL16 (138 aa).

The segment covering 1 to 13 (MLQPARRKYRKEQ) has biased composition (basic residues). The interval 1–22 (MLQPARRKYRKEQKGRNTGVAT) is disordered.

Belongs to the universal ribosomal protein uL16 family. In terms of assembly, part of the 50S ribosomal subunit.

Binds 23S rRNA and is also seen to make contacts with the A and possibly P site tRNAs. This chain is Large ribosomal subunit protein uL16, found in Polaromonas naphthalenivorans (strain CJ2).